The sequence spans 182 residues: Ribosome maturation factor RimM (182 aa).

Positions 103–182 constitute a PRC barrel domain; the sequence is EDEFYWRELF…RIEVDWDPGF (80 aa).

The protein belongs to the RimM family. As to quaternary structure, binds ribosomal protein uS19.

Its subcellular location is the cytoplasm. Functionally, an accessory protein needed during the final step in the assembly of 30S ribosomal subunit, possibly for assembly of the head region. Essential for efficient processing of 16S rRNA. May be needed both before and after RbfA during the maturation of 16S rRNA. It has affinity for free ribosomal 30S subunits but not for 70S ribosomes. The protein is Ribosome maturation factor RimM of Vibrio vulnificus (strain CMCP6).